The following is a 4903-amino-acid chain: Histone-lysine N-methyltransferase 2C (4903 aa).

Disordered stretches follow at residues 1-116 (MSSE…SEES) and 159-202 (LTLP…PPQQ). Over residues 13–28 (QPPPAPPEEPGAPAPS) the composition is skewed to pro residues. 2 positions are modified to phosphoserine: Ser28 and Ser46. A DNA-binding region (a.T hook) is located at residues 34-46 (KRPRGRPRKDGAS). Basic residues predominate over residues 50–59 (RARKKPRSRG). Acidic residues predominate over residues 64 to 81 (EDEDSMDGLETTETENIV). Phosphoserine is present on residues Ser89 and Ser113. The segment covering 101-116 (SKQPVSALQRSVSEES) has biased composition (polar residues). The segment at 226–261 (ELSLVGLPDAIDVQALFDSTGTCWAHHRCVEWSLGI) adopts a C2HC pre-PHD-type 1; degenerate zinc-finger fold. 4 PHD-type zinc fingers span residues 282-330 (ERCA…PEHI), 340-390 (DANC…CKVC), 387-437 (CKVC…CRIC), and 463-519 (DNLC…CKHL). The RING-type zinc finger occupies 343 to 388 (CAVCDSPGDLLDQFFCTTCGQHYHGMCLDIAVTPLKRAGWQCPECK). The region spanning 435-488 (RICIECGTRSSTQWHHNCLICDTCYQQQDNLCPFCGKCYHPELQKDMLHCNMCK) is the DHHC domain. Residues 671-703 (SEVASKELSPPKSAPETAAPEALLSPHSERSLS) form a disordered region. Lys751 is modified (N6-acetyllysine). The span at 824-835 (TKRKFSPGRPRS) shows a compositional bias: basic residues. Disordered regions lie at residues 824–857 (TKRKFSPGRPRSKQGAWSNHNTVSPPSWAPDTSE) and 882–904 (GFPGKRRPRGAGLSGRGGRGRSK). Residues 838–848 (GAWSNHNTVSP) are compositionally biased toward polar residues. Ser847 carries the phosphoserine modification. 3 consecutive PHD-type zinc fingers follow at residues 950–1003 (QDMC…CTVC), 1000–1050 (CTVC…CVWC), and 1077–1132 (LSSC…CRPY). The tract at residues 1208–1318 (AVLQTPPDIQ…PSRDDGWREQ (111 aa)) is disordered. Residues 1217–1263 (QSEHSRDGEMDDSREGELMDCDGKSESSPEREAGDDETKGIEGTDAI) show a composition bias toward basic and acidic residues. Ser1294 bears the Phosphoserine mark. A compositionally biased stretch (basic and acidic residues) spans 1309-1318 (PSRDDGWREQ). Positions 1330–1352 (VAENTDKIKKRYRKRKNKLEETF) form a coiled coil. Disordered regions lie at residues 1397–1419 (SDPLLSSSSTSAKPGTQGTADDP) and 1447–1473 (HSDIGPTTADASSLPQPGVSQSSRPLT). 2 stretches are compositionally biased toward polar residues: residues 1406-1415 (TSAKPGTQGT) and 1455-1471 (ADASSLPQPGVSQSSRP). An N6-acetyllysine modification is found at Lys1497. Disordered stretches follow at residues 1594-1617 (NAIASDPNSSWAPTTPSMEGENDT) and 1698-1757 (VQMS…AKIE). Residues 1599–1617 (DPNSSWAPTTPSMEGENDT) show a composition bias toward polar residues. The span at 1707 to 1717 (RQQQQDSIDPS) shows a compositional bias: low complexity. The span at 1718 to 1742 (SRIDSDLFKDPLKQRESEHEQEWKF) shows a compositional bias: basic and acidic residues. Residues 1743 to 1790 (RQQMRQKSKQQAKIEATQKLEQVKNEQQQQQQQQQQQQQQQLASQHLL) are a coiled coil. N6-acetyllysine is present on Lys1761. Positions 1791–2375 (VAPGSDTPSS…MSQADTEKLR (585 aa)) are disordered. Residues 1796 to 1819 (DTPSSGAQSPLTPQAGNGNVSPAQ) show a composition bias toward polar residues. The span at 1855–1886 (PSRIPVQESLSQSQNSQPPSPQMFSPGSSHSR) shows a compositional bias: low complexity. Ser1983 carries the phosphoserine modification. Positions 1986–2001 (ISEQSTKGPLTTGTSD) are enriched in polar residues. An N6-acetyllysine modification is found at Lys2005. Composition is skewed to polar residues over residues 2113-2124 (GTISRSASQDPY), 2137-2151 (SYSQTSGTARSNPDP), and 2325-2334 (GNFSTSSNLP). The segment covering 2335-2347 (VSSQGQQFSSVSQ) has biased composition (low complexity). A compositionally biased stretch (polar residues) spans 2355 to 2369 (SGGTDTQNTVNMSQA). Asymmetric dimethylarginine occurs at positions 2447 and 2563. Disordered regions lie at residues 2561 to 2668 (RSRL…DNLE), 2702 to 2736 (KDLDDEDLENLNLDTEDGKGDDLDTLDNLETNDPN), and 2786 to 2844 (VEPK…GDAD). Polar residues-rich tracts occupy residues 2602–2611 (QPSQCLSNQL), 2621–2636 (PPSQQEQGHPAHQSSI), and 2653–2668 (PLSTSTPAETSPDNLE). Over residues 2788–2807 (PKTRDQGDKTMVLEDKDLPQ) the composition is skewed to basic and acidic residues. N6-acetyllysine is present on residues Lys2796 and Lys2803. Position 2822 is a phosphoserine (Ser2822). The residue at position 2824 (Tyr2824) is a Phosphotyrosine. The span at 2825–2843 (SKEEIQSEIKNHDDSRGDA) shows a compositional bias: basic and acidic residues. 2 positions are modified to N6-acetyllysine: Lys2826 and Lys2862. The tract at residues 2920 to 2953 (EKCDDSDIRPSGSSPPSLPISPSTHGSSLPPTLI) is disordered. The span at 2929-2942 (PSGSSPPSLPISPS) shows a compositional bias: low complexity. Coiled-coil stretches lie at residues 3047–3074 (LLQDLLDQERQEQQQQRQMQAMIRQRSE) and 3166–3193 (NDSQRKQYEEWLQETQQLLQMQQKYLEE). Basic residues predominate over residues 3198–3214 (HRKSKKALSAKQRTAKK). Residues 3198-3223 (HRKSKKALSAKQRTAKKAGREFPEED) are disordered. 2 coiled-coil regions span residues 3224-3270 (AEQL…QQCA) and 3387-3432 (FSES…QHCL). Disordered stretches follow at residues 3329–3407 (PGWQ…QERQ) and 3444–3910 (SQMP…QKMA). A compositionally biased stretch (basic and acidic residues) spans 3391 to 3407 (FQERERKERLREQQERQ). Over residues 3464 to 3485 (LQQSPQHQQQIGPVLQQQNVQQ) the composition is skewed to low complexity. Composition is skewed to polar residues over residues 3486–3503 (GSVNSPPNQTFMQTNEQR), 3515–3524 (PSASGGSPNF), 3557–3586 (PVANSNVPCGQDPAVTQGQNYSGSSQSLIQ), and 3632–3647 (LSETTSTPAVSSPSEL). 2 stretches are compositionally biased toward basic and acidic residues: residues 3697–3739 (AEAD…KIKD) and 3795–3804 (SSTKDGKLIE). An N6-acetyllysine modification is found at Lys3709. The span at 3871-3885 (MYSSSDSFTHLKQQN) shows a compositional bias: polar residues. Over residues 3890 to 3904 (PPTPPASLPPTPPPM) the composition is skewed to pro residues. Ser4027 carries the post-translational modification Phosphoserine. Arg4132 is modified (asymmetric dimethylarginine). The segment at 4159–4184 (PNVPFPPTSNGLSGYKDSSHGPAEGA) is disordered. Ser4260 is modified (phosphoserine). Residues 4391-4431 (CRKCCFCHEEGDGLTDGPARLLNLDLDLWVHLNCALWSTEV) form a C2HC pre-PHD-type 2 zinc finger. The PHD-type 8 zinc-finger motif lies at 4452 to 4499 (MKCVFCHKTGATSGCHRFRCTNIYHFTCATKAQCMFFKDKTMLCPMHK). An FYR N-terminal domain is found at 4537-4597 (DHTFRVGSLI…CRYLCSIEEK (61 aa)). Residues 4598 to 4683 (DGRPVFVIRI…EACENYTFRY (86 aa)) enclose the FYR C-terminal domain. The WDR5 interaction motif (WIN) motif lies at 4699-4704 (GCARSE). The region spanning 4763–4879 (SNVYLARSRI…KGEELCYDYK (117 aa)) is the SET domain. Residues Tyr4817 and 4840–4841 (NH) contribute to the S-adenosyl-L-methionine site. Cys4843, Cys4891, Cys4893, and Cys4898 together coordinate Zn(2+). In terms of domain architecture, Post-SET spans 4887–4903 (HKIPCHCGAVNCRKWMN).

The protein belongs to the class V-like SAM-binding methyltransferase superfamily. Histone-lysine methyltransferase family. TRX/MLL subfamily. As to quaternary structure, component of the MLL3 complex (also named ASCOM complex), at least composed of catalytic subunit KMT2C/MLL3, ASH2L, RBBP5, WDR5, NCOA6, DPY30, KDM6A, PAXIP1/PTIP, PAGR1 and alpha- and beta-tubulin. Forms a core complex with the evolutionary conserved subcomplex WRAD composed of WDR5, RBBP5, ASH2L/ASH2 and DPY30 subunits; WRAD differentially stimulates the methyltransferase activity. Interacts (via WIN motif) with WDR5. As to expression, in adult, detected in testis, kidney, spleen and lung, weakly expressed in brain and absent in heart and liver. First detected throughout the embryo at 8 dpc when expression is strong in forebrain neuroepithelium and absent in heart. Expressed in the eye lens between 10 and 14.5 dpc. By 13 dpc, expressed strongly in spinal cord, hand/foot plates and gonads.

The protein resides in the nucleus. It carries out the reaction L-lysyl(4)-[histone H3] + S-adenosyl-L-methionine = N(6)-methyl-L-lysyl(4)-[histone H3] + S-adenosyl-L-homocysteine + H(+). In terms of biological role, histone methyltransferase that catalyzes methyl group transfer from S-adenosyl-L-methionine to the epsilon-amino group of 'Lys-4' of histone H3 (H3K4). Part of chromatin remodeling machinery predominantly forms H3K4me1 methylation marks at active chromatin sites where transcription and DNA repair take place. Likely plays a redundant role with KMT2D in enriching H3K4me1 mark on primed and active enhancer elements. The protein is Histone-lysine N-methyltransferase 2C (Kmt2c) of Mus musculus (Mouse).